The sequence spans 138 residues: Large ribosomal subunit protein bL19 (138 aa).

Belongs to the bacterial ribosomal protein bL19 family.

Its function is as follows. This protein is located at the 30S-50S ribosomal subunit interface and may play a role in the structure and function of the aminoacyl-tRNA binding site. The chain is Large ribosomal subunit protein bL19 from Rickettsia canadensis (strain McKiel).